The chain runs to 303 residues: Recombination-associated protein RdgC (303 aa).

This sequence belongs to the RdgC family.

The protein localises to the cytoplasm. The protein resides in the nucleoid. May be involved in recombination. The chain is Recombination-associated protein RdgC from Edwardsiella ictaluri (strain 93-146).